We begin with the raw amino-acid sequence, 252 residues long: Probable transcriptional regulatory protein Haur_3030 (252 aa).

It belongs to the TACO1 family.

It is found in the cytoplasm. This Herpetosiphon aurantiacus (strain ATCC 23779 / DSM 785 / 114-95) protein is Probable transcriptional regulatory protein Haur_3030.